The sequence spans 120 residues: Glycine cleavage system H protein (120 aa).

The Lipoyl-binding domain occupies 17-99 (IATVGITSHA…QGAGWFFKLK (83 aa)). The residue at position 58 (K58) is an N6-lipoyllysine.

Belongs to the GcvH family. In terms of assembly, the glycine cleavage system is composed of four proteins: P, T, L and H. The cofactor is (R)-lipoate.

The glycine cleavage system catalyzes the degradation of glycine. The H protein shuttles the methylamine group of glycine from the P protein to the T protein. The chain is Glycine cleavage system H protein from Agrobacterium fabrum (strain C58 / ATCC 33970) (Agrobacterium tumefaciens (strain C58)).